The sequence spans 375 residues: MSESAPTPRRERVIVGMSGGVDSSVSALLLLQQGYQVEGLFMKNWDEDDGTEYCTAREDLADAQAVCDRIGIKLHTANFAAEYWDNVFEHFLAEYKAGRTPNPDILCNREIKFKAFLDYALMLGADLIATGHYVRRRDRDGRTELLKGLDPNKDQSYFLHAVGGEQIARSLFPVGELEKPEVRAIAEKHGLATAKKKDSTGICFIGERRFTDFLKQYLPAQPGDIETIEGKVIGRHSGLMYHTIGQRQGLGIGGLKEAGDDPWYVLGKDLQRNVLLVGQGNDHPLLFSRALLASRIYWVNPVELERPRRLRAKVRYRQSDQDCVLEKTAEGYRAVFDEPQRAVTPGQSVVFYDGDVCLGGGVIETAEAWDFGGRP.

ATP-binding positions include 16–23 (GMSGGVDS) and methionine 42. The segment at 102-104 (NPD) is interaction with target base in tRNA. Catalysis depends on cysteine 107, which acts as the Nucleophile. Cysteine 107 and cysteine 203 are oxidised to a cystine. Residue glycine 131 coordinates ATP. The tract at residues 153 to 155 (KDQ) is interaction with tRNA. Catalysis depends on cysteine 203, which acts as the Cysteine persulfide intermediate. Residues 315–316 (RY) form an interaction with tRNA region.

Belongs to the MnmA/TRMU family.

Its subcellular location is the cytoplasm. It catalyses the reaction S-sulfanyl-L-cysteinyl-[protein] + uridine(34) in tRNA + AH2 + ATP = 2-thiouridine(34) in tRNA + L-cysteinyl-[protein] + A + AMP + diphosphate + H(+). Catalyzes the 2-thiolation of uridine at the wobble position (U34) of tRNA, leading to the formation of s(2)U34. The protein is tRNA-specific 2-thiouridylase MnmA of Pseudomonas aeruginosa (strain LESB58).